Consider the following 187-residue polypeptide: Cytochrome b-245 chaperone 1 (187 aa).

The chain crosses the membrane as a helical span at residues 20 to 42 (GIRSWSLLVGILSTGLAAAYYSG). The tract at residues 167–187 (ESPSERSQSSDSEPDGPGGQS) is disordered. Residues Ser168 and Ser170 each carry the phosphoserine modification.

It belongs to the CYBC1 family. In terms of assembly, interacts with CYBB; CYBC1 may act as a chaperone stabilizing Cytochrome b-245 heterodimer.

It is found in the endoplasmic reticulum membrane. In terms of biological role, functions as a chaperone necessary for a stable expression of the CYBA and CYBB subunits of the cytochrome b-245 heterodimer. Controls the phagocyte respiratory burst and is essential for innate immunity. The polypeptide is Cytochrome b-245 chaperone 1 (Rattus norvegicus (Rat)).